The following is a 315-amino-acid chain: Glutaminase (315 aa).

7 residues coordinate substrate: S70, N120, E166, N173, Y197, Y249, and V267.

The protein belongs to the glutaminase family. In terms of assembly, homotetramer.

It catalyses the reaction L-glutamine + H2O = L-glutamate + NH4(+). In Sinorhizobium fredii (strain NBRC 101917 / NGR234), this protein is Glutaminase.